The primary structure comprises 93 residues: Phosphoribosyl-ATP pyrophosphatase (93 aa).

Belongs to the PRA-PH family.

The protein resides in the cytoplasm. The enzyme catalyses 1-(5-phospho-beta-D-ribosyl)-ATP + H2O = 1-(5-phospho-beta-D-ribosyl)-5'-AMP + diphosphate + H(+). Its pathway is amino-acid biosynthesis; L-histidine biosynthesis; L-histidine from 5-phospho-alpha-D-ribose 1-diphosphate: step 2/9. The polypeptide is Phosphoribosyl-ATP pyrophosphatase (Rhodococcus erythropolis (strain PR4 / NBRC 100887)).